A 1879-amino-acid chain; its full sequence is Protein TIC 214 (1879 aa).

The next 6 membrane-spanning stretches (helical) occupy residues 18-38 (IINSVVVVGLYYGFLTTFSIG), 67-87 (FITGQLMMFISIYYAPLHLAL), 90-110 (PHTITVLALPYLLFHFFWNNH), 127-147 (LSIQCVFLNNLIFQLFNHFIL), 175-195 (VGWLIGHILFMKWVGLVLVWI), and 218-238 (IFSILLFITCVYYLGRIPSPI). The tract at residues 243–291 (LKETEERGESEEERDVEKTSETKGTKQEQEGSTEEDPSPSLFSEEKEDP) is disordered. The span at 257–271 (DVEKTSETKGTKQEQ) shows a compositional bias: basic and acidic residues.

This sequence belongs to the TIC214 family. Part of the Tic complex.

Its subcellular location is the plastid. It is found in the chloroplast inner membrane. Involved in protein precursor import into chloroplasts. May be part of an intermediate translocation complex acting as a protein-conducting channel at the inner envelope. The sequence is that of Protein TIC 214 from Morus indica (Mulberry).